Consider the following 425-residue polypeptide: Serine--tRNA ligase (425 aa).

An L-serine-binding site is contributed by 231–233 (TAE). 262-264 (RSE) lines the ATP pocket. E285 is a binding site for L-serine. 349–352 (EISS) is a binding site for ATP. Position 385 (S385) interacts with L-serine.

The protein belongs to the class-II aminoacyl-tRNA synthetase family. Type-1 seryl-tRNA synthetase subfamily. In terms of assembly, homodimer. The tRNA molecule binds across the dimer.

The protein localises to the cytoplasm. The enzyme catalyses tRNA(Ser) + L-serine + ATP = L-seryl-tRNA(Ser) + AMP + diphosphate + H(+). It carries out the reaction tRNA(Sec) + L-serine + ATP = L-seryl-tRNA(Sec) + AMP + diphosphate + H(+). It participates in aminoacyl-tRNA biosynthesis; selenocysteinyl-tRNA(Sec) biosynthesis; L-seryl-tRNA(Sec) from L-serine and tRNA(Sec): step 1/1. Its function is as follows. Catalyzes the attachment of serine to tRNA(Ser). Is also able to aminoacylate tRNA(Sec) with serine, to form the misacylated tRNA L-seryl-tRNA(Sec), which will be further converted into selenocysteinyl-tRNA(Sec). The protein is Serine--tRNA ligase of Bartonella quintana (strain Toulouse) (Rochalimaea quintana).